Reading from the N-terminus, the 312-residue chain is 4-diphosphocytidyl-2-C-methyl-D-erythritol kinase (312 aa).

K18 is a catalytic residue. 104–114 (PIAGGMGGGSA) contacts ATP. D146 is a catalytic residue.

It belongs to the GHMP kinase family. IspE subfamily.

It carries out the reaction 4-CDP-2-C-methyl-D-erythritol + ATP = 4-CDP-2-C-methyl-D-erythritol 2-phosphate + ADP + H(+). Its pathway is isoprenoid biosynthesis; isopentenyl diphosphate biosynthesis via DXP pathway; isopentenyl diphosphate from 1-deoxy-D-xylulose 5-phosphate: step 3/6. Catalyzes the phosphorylation of the position 2 hydroxy group of 4-diphosphocytidyl-2C-methyl-D-erythritol. In Clavibacter michiganensis subsp. michiganensis (strain NCPPB 382), this protein is 4-diphosphocytidyl-2-C-methyl-D-erythritol kinase.